The primary structure comprises 137 residues: Large ribosomal subunit protein uL16 (137 aa).

The protein belongs to the universal ribosomal protein uL16 family. As to quaternary structure, part of the 50S ribosomal subunit.

Binds 23S rRNA and is also seen to make contacts with the A and possibly P site tRNAs. In Chlamydia abortus (strain DSM 27085 / S26/3) (Chlamydophila abortus), this protein is Large ribosomal subunit protein uL16.